A 291-amino-acid polypeptide reads, in one-letter code: Elongation factor Ts (291 aa).

The segment at 79–82 (TDFV) is involved in Mg(2+) ion dislocation from EF-Tu.

It belongs to the EF-Ts family.

The protein resides in the cytoplasm. Functionally, associates with the EF-Tu.GDP complex and induces the exchange of GDP to GTP. It remains bound to the aminoacyl-tRNA.EF-Tu.GTP complex up to the GTP hydrolysis stage on the ribosome. The polypeptide is Elongation factor Ts (Ruegeria sp. (strain TM1040) (Silicibacter sp.)).